The sequence spans 628 residues: Probable potassium transport system protein Kup (628 aa).

Helical transmembrane passes span 15-35 (LAIA…LYSL), 55-75 (VISL…VLFV), 104-124 (AGLL…DAVI), 142-162 (PHLS…LFWI), 173-193 (LFGP…LWHI), 210-230 (TFMA…VLVL), 252-272 (WYVL…ALLM), 281-301 (PFFL…STIA), 342-362 (IYVP…VIAF), 372-392 (YGIA…VVMV), 400-420 (LLVA…FGAN), and 426-446 (EGGW…MTWY).

It belongs to the HAK/KUP transporter (TC 2.A.72) family.

It is found in the cell inner membrane. The catalysed reaction is K(+)(in) + H(+)(in) = K(+)(out) + H(+)(out). In terms of biological role, transport of potassium into the cell. Likely operates as a K(+):H(+) symporter. The protein is Probable potassium transport system protein Kup of Paraburkholderia xenovorans (strain LB400).